A 75-amino-acid chain; its full sequence is Large ribosomal subunit protein bL28 (75 aa).

The protein belongs to the bacterial ribosomal protein bL28 family.

This chain is Large ribosomal subunit protein bL28, found in Buchnera aphidicola subsp. Acyrthosiphon pisum (strain 5A).